A 503-amino-acid polypeptide reads, in one-letter code: Chromodomain Y-like protein 2 (503 aa).

One can recognise a Chromo domain in the interval 7 to 67 (YEVERIVDKR…LHLSKDKRVK (61 aa)). Positions 66-177 (VKSGKQAGAS…GNGSHQPDLE (112 aa)) are disordered. Positions 88–98 (RLSHRPLEPGK) are enriched in basic and acidic residues. Over residues 101 to 120 (PSSHKRKRVNSPLSRPKKGS) the composition is skewed to basic residues. The span at 130–140 (KTVSYRTTPSG) shows a compositional bias: polar residues.

Interacts (via chromo domain) with histone H3K9me3.

It is found in the nucleus. This Mus musculus (Mouse) protein is Chromodomain Y-like protein 2 (Cdyl2).